The following is a 469-amino-acid chain: Ribulose bisphosphate carboxylase large chain (469 aa).

Lys5 bears the N6,N6,N6-trimethyllysine mark. Substrate is bound by residues Asn114 and Thr164. Lys166 (proton acceptor) is an active-site residue. Lys168 is a substrate binding site. Positions 192, 194, and 195 each coordinate Mg(2+). At Lys192 the chain carries N6-carboxylysine. The active-site Proton acceptor is His285. Substrate is bound by residues Arg286, His318, and Ser370.

Belongs to the RuBisCO large chain family. Type I subfamily. In terms of assembly, heterohexadecamer of 8 large chains and 8 small chains; disulfide-linked. The disulfide link is formed within the large subunit homodimers. It depends on Mg(2+) as a cofactor. Post-translationally, the disulfide bond which can form in the large chain dimeric partners within the hexadecamer appears to be associated with oxidative stress and protein turnover.

The protein resides in the plastid. The protein localises to the chloroplast. It catalyses the reaction 2 (2R)-3-phosphoglycerate + 2 H(+) = D-ribulose 1,5-bisphosphate + CO2 + H2O. The enzyme catalyses D-ribulose 1,5-bisphosphate + O2 = 2-phosphoglycolate + (2R)-3-phosphoglycerate + 2 H(+). In terms of biological role, ruBisCO catalyzes two reactions: the carboxylation of D-ribulose 1,5-bisphosphate, the primary event in carbon dioxide fixation, as well as the oxidative fragmentation of the pentose substrate in the photorespiration process. Both reactions occur simultaneously and in competition at the same active site. In Antirhea lucida (Palo iloron), this protein is Ribulose bisphosphate carboxylase large chain.